An 86-amino-acid polypeptide reads, in one-letter code: Small ribosomal subunit protein bS18 (86 aa).

The interval 1–20 (MSREEGNNGRRPGGKMRRSR) is disordered.

This sequence belongs to the bacterial ribosomal protein bS18 family. As to quaternary structure, part of the 30S ribosomal subunit. Forms a tight heterodimer with protein bS6.

Functionally, binds as a heterodimer with protein bS6 to the central domain of the 16S rRNA, where it helps stabilize the platform of the 30S subunit. In Clostridium beijerinckii (strain ATCC 51743 / NCIMB 8052) (Clostridium acetobutylicum), this protein is Small ribosomal subunit protein bS18.